The sequence spans 419 residues: UDP-N-acetylglucosamine 1-carboxyvinyltransferase (419 aa).

22–23 (KN) contacts phosphoenolpyruvate. Arg91 contributes to the UDP-N-acetyl-alpha-D-glucosamine binding site. Cys115 (proton donor) is an active-site residue. Cys115 carries the 2-(S-cysteinyl)pyruvic acid O-phosphothioketal modification. UDP-N-acetyl-alpha-D-glucosamine-binding positions include 120 to 124 (RPVDL), 160 to 163 (KVSV), Asp305, and Val327.

Belongs to the EPSP synthase family. MurA subfamily.

Its subcellular location is the cytoplasm. The catalysed reaction is phosphoenolpyruvate + UDP-N-acetyl-alpha-D-glucosamine = UDP-N-acetyl-3-O-(1-carboxyvinyl)-alpha-D-glucosamine + phosphate. Its pathway is cell wall biogenesis; peptidoglycan biosynthesis. Its function is as follows. Cell wall formation. Adds enolpyruvyl to UDP-N-acetylglucosamine. This is UDP-N-acetylglucosamine 1-carboxyvinyltransferase from Escherichia fergusonii (strain ATCC 35469 / DSM 13698 / CCUG 18766 / IAM 14443 / JCM 21226 / LMG 7866 / NBRC 102419 / NCTC 12128 / CDC 0568-73).